A 122-amino-acid polypeptide reads, in one-letter code: Large ribosomal subunit protein uL18 (122 aa).

The disordered stretch occupies residues 1-20 (MFKKVSKNANRLSRHQRVRN).

It belongs to the universal ribosomal protein uL18 family. As to quaternary structure, part of the 50S ribosomal subunit; part of the 5S rRNA/L5/L18/L25 subcomplex. Contacts the 5S and 23S rRNAs.

Functionally, this is one of the proteins that bind and probably mediate the attachment of the 5S RNA into the large ribosomal subunit, where it forms part of the central protuberance. The protein is Large ribosomal subunit protein uL18 of Alkaliphilus oremlandii (strain OhILAs) (Clostridium oremlandii (strain OhILAs)).